We begin with the raw amino-acid sequence, 943 residues long: Glycine dehydrogenase (decarboxylating) (943 aa).

Lysine 695 bears the N6-(pyridoxal phosphate)lysine mark.

It belongs to the GcvP family. The glycine cleavage system is composed of four proteins: P, T, L and H. Pyridoxal 5'-phosphate serves as cofactor.

It carries out the reaction N(6)-[(R)-lipoyl]-L-lysyl-[glycine-cleavage complex H protein] + glycine + H(+) = N(6)-[(R)-S(8)-aminomethyldihydrolipoyl]-L-lysyl-[glycine-cleavage complex H protein] + CO2. The glycine cleavage system catalyzes the degradation of glycine. The P protein binds the alpha-amino group of glycine through its pyridoxal phosphate cofactor; CO(2) is released and the remaining methylamine moiety is then transferred to the lipoamide cofactor of the H protein. The sequence is that of Glycine dehydrogenase (decarboxylating) from Jannaschia sp. (strain CCS1).